The chain runs to 1127 residues: Zinc finger protein basonuclin-2 (1127 aa).

The disordered stretch occupies residues 44–67 (SEEAEVDVRERDTQRDREPKRARD). Over residues 49-67 (VDVRERDTQRDREPKRARD) the composition is skewed to basic and acidic residues. Lys-305 participates in a covalent cross-link: Glycyl lysine isopeptide (Lys-Gly) (interchain with G-Cter in SUMO2). The disordered stretch occupies residues 386–450 (STQNEYNESS…DLSKTEHPKS (65 aa)). The segment covering 389 to 400 (NEYNESSESEVS) has biased composition (low complexity). Residues 403-422 (PYKSDQTPNRNALTSITNVE) are compositionally biased toward polar residues. Glycyl lysine isopeptide (Lys-Gly) (interchain with G-Cter in SUMO2) cross-links involve residues Lys-424, Lys-444, and Lys-449. The C2H2-type 1 zinc finger occupies 469–492 (VFCNACGKTFYDKGTLKIHYNAVH). Ser-589 is subject to Phosphoserine. Lys-669 participates in a covalent cross-link: Glycyl lysine isopeptide (Lys-Gly) (interchain with G-Cter in SUMO2). Residues 675 to 772 (IDTADEFDDE…EESMEGDEHL (98 aa)) form a disordered region. Acidic residues predominate over residues 676 to 689 (DTADEFDDEDDDPN). Basic and acidic residues-rich tracts occupy residues 698–708 (MSHDNHCHSQD) and 747–772 (ERDY…DEHL). The C2H2-type 2 zinc-finger motif lies at 861–884 (KICYVCKKSFKSSYSVKLHYRNVH). Glycyl lysine isopeptide (Lys-Gly) (interchain with G-Cter in SUMO2) cross-links involve residues Lys-922 and Lys-947. Disordered stretches follow at residues 955–976 (LGLD…HLNG) and 996–1041 (LQSS…TLPG). Acidic residues predominate over residues 1010–1023 (AGSDEGILLDDIDG). 2 C2H2-type zinc fingers span residues 1063-1086 (IMCN…KTVH) and 1091-1118 (HKCK…PNLH). Positions 1107 to 1127 (SRNRHSQNPNLHKNIPFTSID) are disordered.

In terms of tissue distribution, highly expressed in ovary, testis and kidney. Expressed at moderate levels in skin and small intestine, and at lower levels in lung. Trace amounts of expression detected in liver and colon. Not detected in brain, spleen or thymus.

Its subcellular location is the nucleus. Functionally, probable transcription factor specific for skin keratinocytes. May play a role in the differentiation of spermatozoa and oocytes. May also play an important role in early urinary-tract development. The protein is Zinc finger protein basonuclin-2 of Mus musculus (Mouse).